We begin with the raw amino-acid sequence, 452 residues long: Keratin, type I cytoskeletal 42 (452 aa).

Positions threonine 4–serine 93 are head. Positions glutamate 94–tryptophan 129 are coil 1A. The IF rod domain maps to glutamate 94–leucine 405. Residues tyrosine 130–threonine 147 are linker 1. A coil 1B region spans residues isoleucine 148 to leucine 239. Residues arginine 240 to isoleucine 262 form a linker 12 region. The segment at leucine 263 to glutamate 401 is coil 2. Residues aspartate 402–histidine 452 form a tail region.

This sequence belongs to the intermediate filament family. As to quaternary structure, heterodimer of a type I and a type II keratin. Colocalizes with KRT8/KRT18 filament network. Expressed in nail matrix and nail bed epithelium (at protein level). Also expressed in tongue and digits with weak expression in vibrissae and in both filiform and fungiform papillae of oral mucosa.

The protein localises to the cytoplasm. The chain is Keratin, type I cytoskeletal 42 from Mus musculus (Mouse).